The following is a 328-amino-acid chain: uncharacterized protein (328 aa).

The segment at 296–328 (APEGDLEDEIIEVDPEQPRDDPYRRLRTPPPGG) is disordered. A compositionally biased stretch (acidic residues) spans 299-310 (GDLEDEIIEVDP).

Possibly necessary for replication. This is an uncharacterized protein from Halobacterium sp. (strain GN101).